The primary structure comprises 420 residues: FLYWCH transcription factor 3 (420 aa).

Over residues 87-104 (SSTSPDSQPSSSSSVMSS) the composition is skewed to low complexity. Disordered regions lie at residues 87–107 (SSTSPDSQPSSSSSVMSSTDE) and 119–138 (KINKAQRQSSPNSSKPYTPR). Positions 123 to 134 (AQRQSSPNSSKP) are enriched in polar residues. The FLYWCH-type zinc-finger motif lies at 140–195 (IRERVLFDEHLYVFDKCSYDSKKRFFRCERKNTCPARIHTPFDAERVIHKVQVHNH).

Its function is as follows. Probable transcription factor. May bind to the promoters of target genes, including micro-RNA genes, in order to repress expression, and acting redundantly with flh-2. In Caenorhabditis elegans, this protein is FLYWCH transcription factor 3.